We begin with the raw amino-acid sequence, 257 residues long: TLC domain-containing protein 3A (257 aa).

The next 7 membrane-spanning stretches (helical) occupy residues 1-21, 42-62, 71-91, 114-134, 142-162, 181-201, and 220-240; these read MLLT…LSIW, LVSS…IISC, WLAT…FYAM, LIEN…LVPI, LGDF…FVSL, GILT…FMYW, and LHCN…FSLL. The TLC domain maps to 33–249; it reads DDCLTVGTRL…LCKKAARLFD (217 aa).

In terms of assembly, interacts with GGT7 isoform 3 and SLC3A2.

It is found in the cell membrane. The sequence is that of TLC domain-containing protein 3A (Tlcd3a) from Mus musculus (Mouse).